The sequence spans 392 residues: D-amino-acid oxidase 2 (392 aa).

FAD is bound by residues S10, I13, R33, D34, A45, S46, G50, and N52. Positions 56, 245, 262, and 311 each coordinate anthranilate. 3 residues coordinate (R)-lactate: Y245, Y262, and R311. The FAD site is built by R311, G361, S362, G364, and Q366. S362 is a binding site for anthranilate. S362 contributes to the (R)-lactate binding site. A Microbody targeting signal motif is present at residues 390–392; sequence AKL.

The protein belongs to the DAMOX/DASOX family. Requires FAD as cofactor.

Its subcellular location is the peroxisome matrix. The enzyme catalyses a D-alpha-amino acid + O2 + H2O = a 2-oxocarboxylate + H2O2 + NH4(+). It catalyses the reaction D-methionine + O2 + H2O = 4-methylsulfanyl-2-oxobutanoate + H2O2 + NH4(+). It carries out the reaction D-serine + O2 + H2O = 3-hydroxypyruvate + H2O2 + NH4(+). The catalysed reaction is D-histidine + O2 + H2O = 3-(imidazol-5-yl)pyruvate + H2O2 + NH4(+). The enzyme catalyses D-proline + O2 = 1-pyrroline-2-carboxylate + H2O2. It catalyses the reaction D-alanine + O2 + H2O = pyruvate + H2O2 + NH4(+). It carries out the reaction D-leucine + O2 + H2O = 4-methyl-2-oxopentanoate + H2O2 + NH4(+). The catalysed reaction is D-valine + O2 + H2O = 3-methyl-2-oxobutanoate + H2O2 + NH4(+). In terms of biological role, catalyzes the oxidative deamination of D-amino acids with broad substrate specificity. Enables the organism to utilize D-amino acids as a source of nutrients. Enables the organism to utilize D-alanine, D-cysteine, D-histidine, D-leucine, D-methionine, D-phenylalanine, D-proline, D-serine, D-threonine, D-aspartate and D-valine as a nitrogen source and may also contribute to utlization of D-tryptophan, D-tyrosine and D-asparagine as a nitrogen source. Protects the organism from the toxicity of D-amino acids, including from D-alanine. May play a role in its interaction with the host. The sequence is that of D-amino-acid oxidase 2 from Cryptococcus deuterogattii (strain R265) (Cryptococcus gattii VGII (strain R265)).